Here is a 93-residue protein sequence, read N- to C-terminus: UPF0147 protein PF0239 (93 aa).

This sequence belongs to the UPF0147 family.

This Pyrococcus furiosus (strain ATCC 43587 / DSM 3638 / JCM 8422 / Vc1) protein is UPF0147 protein PF0239.